The chain runs to 171 residues: NADH-quinone oxidoreductase subunit I 2 (171 aa).

4Fe-4S ferredoxin-type domains follow at residues 39 to 71 (IVLTRDPDGQERCVACNLCAVACPVGCIDLSKA) and 81 to 110 (EHFRINFARCIFCGYCEEACPTAAIQLTPD). [4Fe-4S] cluster-binding residues include Cys-51, Cys-54, Cys-57, Cys-61, Cys-90, Cys-93, Cys-96, and Cys-100.

It belongs to the complex I 23 kDa subunit family. As to quaternary structure, NDH-1 is composed of 14 different subunits. Subunits NuoA, H, J, K, L, M, N constitute the membrane sector of the complex. [4Fe-4S] cluster is required as a cofactor.

The protein resides in the cell inner membrane. It carries out the reaction a quinone + NADH + 5 H(+)(in) = a quinol + NAD(+) + 4 H(+)(out). Functionally, NDH-1 shuttles electrons from NADH, via FMN and iron-sulfur (Fe-S) centers, to quinones in the respiratory chain. The immediate electron acceptor for the enzyme in this species is believed to be ubiquinone. Couples the redox reaction to proton translocation (for every two electrons transferred, four hydrogen ions are translocated across the cytoplasmic membrane), and thus conserves the redox energy in a proton gradient. This is NADH-quinone oxidoreductase subunit I 2 from Rhodopseudomonas palustris (strain BisB18).